Reading from the N-terminus, the 447-residue chain is Argininosuccinate lyase (447 aa).

Belongs to the lyase 1 family. Argininosuccinate lyase subfamily.

Its subcellular location is the cytoplasm. It carries out the reaction 2-(N(omega)-L-arginino)succinate = fumarate + L-arginine. Its pathway is amino-acid biosynthesis; L-arginine biosynthesis; L-arginine from L-ornithine and carbamoyl phosphate: step 3/3. This Bacteroides fragilis (strain ATCC 25285 / DSM 2151 / CCUG 4856 / JCM 11019 / LMG 10263 / NCTC 9343 / Onslow / VPI 2553 / EN-2) protein is Argininosuccinate lyase.